The primary structure comprises 212 residues: Pyridoxine/pyridoxamine 5'-phosphate oxidase (212 aa).

Substrate contacts are provided by residues 7–10 (REEY) and Lys-65. Residues 60 to 65 (RTVLLK), 75 to 76 (FT), Lys-82, and Gln-104 contribute to the FMN site. Substrate contacts are provided by Tyr-122, Arg-126, and Ser-130. FMN contacts are provided by residues 139–140 (QS) and Trp-184. 190 to 192 (RLH) contributes to the substrate binding site. Residue Arg-194 coordinates FMN.

Belongs to the pyridoxamine 5'-phosphate oxidase family. As to quaternary structure, homodimer. Requires FMN as cofactor.

The catalysed reaction is pyridoxamine 5'-phosphate + O2 + H2O = pyridoxal 5'-phosphate + H2O2 + NH4(+). The enzyme catalyses pyridoxine 5'-phosphate + O2 = pyridoxal 5'-phosphate + H2O2. Its pathway is cofactor metabolism; pyridoxal 5'-phosphate salvage; pyridoxal 5'-phosphate from pyridoxamine 5'-phosphate: step 1/1. It functions in the pathway cofactor metabolism; pyridoxal 5'-phosphate salvage; pyridoxal 5'-phosphate from pyridoxine 5'-phosphate: step 1/1. In terms of biological role, catalyzes the oxidation of either pyridoxine 5'-phosphate (PNP) or pyridoxamine 5'-phosphate (PMP) into pyridoxal 5'-phosphate (PLP). The sequence is that of Pyridoxine/pyridoxamine 5'-phosphate oxidase from Rippkaea orientalis (strain PCC 8801 / RF-1) (Cyanothece sp. (strain PCC 8801)).